The primary structure comprises 370 residues: Pyruvate dehydrogenase E1 component subunit alpha (370 aa).

In terms of assembly, heterodimer of an alpha and a beta chain. Thiamine diphosphate is required as a cofactor.

The catalysed reaction is N(6)-[(R)-lipoyl]-L-lysyl-[protein] + pyruvate + H(+) = N(6)-[(R)-S(8)-acetyldihydrolipoyl]-L-lysyl-[protein] + CO2. In terms of biological role, the pyruvate dehydrogenase complex catalyzes the overall conversion of pyruvate to acetyl-CoA and CO(2). It contains multiple copies of three enzymatic components: pyruvate dehydrogenase (E1), dihydrolipoamide acetyltransferase (E2) and lipoamide dehydrogenase (E3). In Staphylococcus epidermidis (strain ATCC 35984 / DSM 28319 / BCRC 17069 / CCUG 31568 / BM 3577 / RP62A), this protein is Pyruvate dehydrogenase E1 component subunit alpha (pdhA).